Consider the following 373-residue polypeptide: P2Y purinoceptor 1 (373 aa).

Residues 1 to 51 (MTEVLWPAVPNGTDTAFLADPGSPWGNSTVTSTAAVASPFKCALTKTGFQF) are Extracellular-facing. 2 N-linked (GlcNAc...) asparagine glycosylation sites follow: Asn-11 and Asn-27. 2 disulfides stabilise this stretch: Cys-42-Cys-296 and Cys-124-Cys-202. Lys-46 contacts ADP. Residues 52 to 74 (YYLPAVYILVFIIGFLGNSVAIW) traverse the membrane as a helical segment. Topologically, residues 75–87 (MFVFHMKPWSGIS) are cytoplasmic. A helical membrane pass occupies residues 88–109 (VYMFNLALADFLYVLTLPALIF). The Extracellular portion of the chain corresponds to 110 to 125 (YYFNKTDWIFGDAMCK). A glycan (N-linked (GlcNAc...) asparagine) is linked at Asn-113. A helical membrane pass occupies residues 126-147 (LQRFIFHVNLYGSILFLTCISA). Topologically, residues 148-166 (HRYSGVVYPLKSLGRLKKK) are cytoplasmic. A helical transmembrane segment spans residues 167-188 (NAVYISVLVWLIVVVGISPILF). At 189–214 (YSGTGIRKNKTITCYDTTSDEYLRSY) the chain is on the extracellular side. Asn-197 carries an N-linked (GlcNAc...) asparagine glycan. 203–205 (YDT) provides a ligand contact to ADP. A helical membrane pass occupies residues 215–237 (FIYSMCTTVAMFCVPLVLILGCY). Residues 238 to 260 (GLIVRALIYKDLDNSPLRRKSIY) lie on the Cytoplasmic side of the membrane. Residues 261-284 (LVIIVLTVFAVSYIPFHVMKTMNL) form a helical membrane-spanning segment. ADP contacts are provided by residues 283–287 (NLRAR), 303–306 (YATY), and Arg-310. The Extracellular segment spans residues 285-303 (RARLDFQTPEMCAFNDRVY). Residues 304–325 (ATYQVTRGLASLNSCVDPILYF) traverse the membrane as a helical segment. Over 326–373 (LAGDTFRRRLSRATRKASRRSEANLQSKSEDMTLNILSEFKQNGDTSL) the chain is Cytoplasmic.

This sequence belongs to the G-protein coupled receptor 1 family.

It localises to the cell membrane. Receptor for extracellular adenine nucleotides such as ADP. In platelets, binding to ADP leads to mobilization of intracellular calcium ions via activation of phospholipase C, a change in platelet shape, and ultimately platelet aggregation. The protein is P2Y purinoceptor 1 (P2RY1) of Bos taurus (Bovine).